The sequence spans 812 residues: Valine--tRNA ligase (812 aa).

Positions 46-56 (PTVSGQLHIGH) match the 'HIGH' region motif. The 'KMSKS' region signature appears at 536 to 540 (KMSKS). Residue K539 participates in ATP binding.

Belongs to the class-I aminoacyl-tRNA synthetase family. ValS type 2 subfamily. Monomer.

Its subcellular location is the cytoplasm. The catalysed reaction is tRNA(Val) + L-valine + ATP = L-valyl-tRNA(Val) + AMP + diphosphate. Functionally, catalyzes the attachment of valine to tRNA(Val). As ValRS can inadvertently accommodate and process structurally similar amino acids such as threonine, to avoid such errors, it has a 'posttransfer' editing activity that hydrolyzes mischarged Thr-tRNA(Val) in a tRNA-dependent manner. This is Valine--tRNA ligase from Rickettsia rickettsii (strain Iowa).